Consider the following 464-residue polypeptide: Aspartyl protease AED1 (464 aa).

Positions 1–25 (MSIMRNFLSMIIMLCVCLNWCFAEG) are cleaved as a signal peptide. A Peptidase A1 domain is found at 132 to 460 (YIVTIGIGTP…DVAGGRVGFA (329 aa)). Residues D150 and D345 contribute to the active site. An intrachain disulfide couples C384 to C425.

It belongs to the peptidase A1 family.

The protein resides in the secreted. It localises to the extracellular space. Its subcellular location is the apoplast. Its function is as follows. Aspartyl protease involved in a homeostatic feedback mechanism regulating systemic immunity. Has only mild or no influence on local defenses. Acts downstream of salicylic acid to suppress systemic immunity. This chain is Aspartyl protease AED1, found in Arabidopsis thaliana (Mouse-ear cress).